The chain runs to 296 residues: Probable alpha-L-glutamate ligase (296 aa).

The region spanning 104-287 is the ATP-grasp domain; it reads LQLLARQGID…IATLMITFIE (184 aa). ATP-binding positions include Lys141, 178–179, Asp187, and 211–213; these read EF and RSN. Mg(2+) contacts are provided by Asp248, Glu260, and Asn262. The Mn(2+) site is built by Asp248, Glu260, and Asn262.

The protein belongs to the RimK family. Mg(2+) serves as cofactor. Requires Mn(2+) as cofactor.

This chain is Probable alpha-L-glutamate ligase, found in Sodalis glossinidius (strain morsitans).